A 1659-amino-acid chain; its full sequence is Intersectin-2 (1659 aa).

The EH 1 domain occupies 22–110 (ERTKHDKQFD…PIMKQPPMFS (89 aa)). The region spanning 54 to 89 (LPAPVLAEIWALSDLNKDGKMDQQEFSIAMKLIKLK) is the EF-hand 1 domain. Asp-67, Asn-69, Asp-71, Lys-73, and Glu-78 together coordinate Ca(2+). Phosphoserine occurs at positions 110, 211, and 231. Over residues 220–231 (STSSTASLSGNS) the composition is skewed to low complexity. The disordered stretch occupies residues 220 to 242 (STSSTASLSGNSPKTGTSEWAVP). Positions 245–334 (SRLKYRQKFN…PELVPPSFRG (90 aa)) constitute an EH 2 domain. In terms of domain architecture, EF-hand 2 spans 278–313 (LSQTQLATIWTLADIDGDGQLKAEEFILAMHLTDMA). The tract at residues 335–382 (GKQVDSVNGTLPSYQKTQEEEPQKKLPVTFEDKRKANYERGNMELEKR) is disordered. Residues 339–350 (DSVNGTLPSYQK) show a composition bias toward polar residues. Over residues 351–382 (TQEEEPQKKLPVTFEDKRKANYERGNMELEKR) the composition is skewed to basic and acidic residues. Residues 365–717 (EDKRKANYER…KAEAKQSETA (353 aa)) are a coiled coil. Tyr-554 carries the post-translational modification Phosphotyrosine. Phosphothreonine is present on Thr-574. The segment covering 689–713 (KQKRLQEEKSQDKTQEEERKAEAKQ) has biased composition (basic and acidic residues). The tract at residues 689–715 (KQKRLQEEKSQDKTQEEERKAEAKQSE) is disordered. In terms of domain architecture, SH3 1 spans 718–779 (SALVNYRALY…PCNYVEKVLS (62 aa)). A Phosphothreonine modification is found at Thr-836. Phosphoserine is present on residues Ser-838 and Ser-843. Residues 852-910 (VENLKAQALCSWTAKKENHLNFSKHDVITVLEQQENWWFGEVHGGRGWFPKSYVKLIPG) form the SH3 2 domain. Tyr-922 bears the Phosphotyrosine mark. SH3 domains are found at residues 942–1000 (PVGE…PKDQ), 1014–1078 (KKPE…LLGP), and 1088–1147 (HAVC…MTTD). Residues 1170–1357 (KRQGYIHELI…EELCSQVNEG (188 aa)) enclose the DH domain. The region spanning 1396–1506 (KLLHSGKLYK…WVQKIKGASE (111 aa)) is the PH domain. Residues 1514–1630 (KKREKAYQAR…RTEQESKGPT (117 aa)) enclose the C2 domain. Positions 1602, 1605, and 1608 each coordinate Ca(2+).

Belongs to a complex that may contain multimers of ITSN1, ITSN2 and EPS15, and different partners according to the step in the endocytic process. Interacts with ADAM15. Interacts with FASLG. Interacts with ANKRD54. Interacts with FCHO2. The cofactor is Ca(2+). Widely expressed in adult tissues.

It localises to the cytoplasm. Adapter protein that may provide indirect link between the endocytic membrane traffic and the actin assembly machinery. May regulate the formation of clathrin-coated vesicles (CCPs). Seems to be involved in CCPs maturation including invagination or budding. Involved in endocytosis of integrin beta-1 (ITGB1) and transferrin receptor (TFR). Plays a role in dendrite formation by melanocytes. The sequence is that of Intersectin-2 (Itsn2) from Mus musculus (Mouse).